The primary structure comprises 510 residues: ATP synthase subunit alpha (510 aa).

169-176 is an ATP binding site; sequence GDRQTGKT.

This sequence belongs to the ATPase alpha/beta chains family. F-type ATPases have 2 components, CF(1) - the catalytic core - and CF(0) - the membrane proton channel. CF(1) has five subunits: alpha(3), beta(3), gamma(1), delta(1), epsilon(1). CF(0) has three main subunits: a(1), b(2) and c(9-12). The alpha and beta chains form an alternating ring which encloses part of the gamma chain. CF(1) is attached to CF(0) by a central stalk formed by the gamma and epsilon chains, while a peripheral stalk is formed by the delta and b chains.

The protein resides in the cell inner membrane. It catalyses the reaction ATP + H2O + 4 H(+)(in) = ADP + phosphate + 5 H(+)(out). Functionally, produces ATP from ADP in the presence of a proton gradient across the membrane. The alpha chain is a regulatory subunit. The polypeptide is ATP synthase subunit alpha (Methylobacterium radiotolerans (strain ATCC 27329 / DSM 1819 / JCM 2831 / NBRC 15690 / NCIMB 10815 / 0-1)).